Consider the following 206-residue polypeptide: Uridine kinase (206 aa).

9–16 contacts ATP; it reads GGSGSGKT.

The protein belongs to the uridine kinase family.

The protein localises to the cytoplasm. The enzyme catalyses uridine + ATP = UMP + ADP + H(+). It carries out the reaction cytidine + ATP = CMP + ADP + H(+). The protein operates within pyrimidine metabolism; CTP biosynthesis via salvage pathway; CTP from cytidine: step 1/3. It functions in the pathway pyrimidine metabolism; UMP biosynthesis via salvage pathway; UMP from uridine: step 1/1. The polypeptide is Uridine kinase (Borrelia garinii subsp. bavariensis (strain ATCC BAA-2496 / DSM 23469 / PBi) (Borreliella bavariensis)).